The chain runs to 639 residues: CTTNBP2 N-terminal-like protein (639 aa).

Residues 87–285 adopt a coiled-coil conformation; that stretch reads MKQCKNMQER…DLEASHQHSS (199 aa). Phosphoserine occurs at positions 284 and 285. 3 disordered regions span residues 387–430, 463–490, and 511–609; these read VENG…PCSS, RHKFQSQADQDQQASGLQSPPSRDLSPT, and RFTS…AASL. 2 stretches are compositionally biased toward low complexity: residues 407-430 and 467-477; these read PSSGSSLSPSSTASSSLTSSPCSS and QSQADQDQQAS. Phosphoserine occurs at positions 481, 488, 523, 527, 560, 563, and 568. Polar residues predominate over residues 511-529; it reads RFTSQQGPIKPVSPNSSPF. T570 and T590 each carry phosphothreonine. A compositionally biased stretch (low complexity) spans 587–600; it reads PGLTPSPSATTPLT. At S592 the chain carries Phosphoserine.

Interacts with CTTN/cortactin; this interaction may redistribute CTTN to stress fibers. May form homomers. Associates with the core of STRIPAK complexes composed of PP2A catalytic and scaffolding subunits, the striatins (PP2A regulatory subunits), the striatin-associated proteins MOB4, STRIP1 and STRIP2, PDCD10 and members of the STE20 kinases, such as STK24 and STK26.

It is found in the cell projection. It localises to the lamellipodium. Its subcellular location is the cytoplasm. The protein resides in the cytoskeleton. The protein localises to the stress fiber. Functionally, regulates lamellipodial actin dynamics in a CTTN-dependent manner. Associates with core striatin-interacting phosphatase and kinase (STRIPAK) complex to form CTTNBP2NL-STRIPAK complexes. STRIPAK complexes have critical roles in protein (de)phosphorylation and are regulators of multiple signaling pathways including Hippo, MAPK, nuclear receptor and cytoskeleton remodeling. Different types of STRIPAK complexes are involved in a variety of biological processes such as cell growth, differentiation, apoptosis, metabolism and immune regulation. This Pongo abelii (Sumatran orangutan) protein is CTTNBP2 N-terminal-like protein (CTTNBP2NL).